The following is a 467-amino-acid chain: Mitochondrial distribution and morphology protein 10 (467 aa).

It belongs to the MDM10 family. As to quaternary structure, component of the ER-mitochondria encounter structure (ERMES) or MDM complex, composed of MMM1, MDM10, MDM12 and MDM34. Associates with the mitochondrial outer membrane sorting assembly machinery SAM(core) complex.

It localises to the mitochondrion outer membrane. Component of the ERMES/MDM complex, which serves as a molecular tether to connect the endoplasmic reticulum and mitochondria. Components of this complex are involved in the control of mitochondrial shape and protein biogenesis and may function in phospholipid exchange. MDM10 is involved in the late assembly steps of the general translocase of the mitochondrial outer membrane (TOM complex). Functions in the TOM40-specific route of the assembly of outer membrane beta-barrel proteins, including the association of TOM40 with the receptor TOM22 and small TOM proteins. Can associate with the SAM(core) complex as well as the MDM12-MMM1 complex, both involved in late steps of the major beta-barrel assembly pathway, that is responsible for biogenesis of all outer membrane beta-barrel proteins. May act as a switch that shuttles between both complexes and channels precursor proteins into the TOM40-specific pathway. Plays a role in mitochondrial morphology and in the inheritance of mitochondria. The chain is Mitochondrial distribution and morphology protein 10 from Ajellomyces capsulatus (strain G186AR / H82 / ATCC MYA-2454 / RMSCC 2432) (Darling's disease fungus).